Reading from the N-terminus, the 1176-residue chain is Pesticidal crystal protein Cry1Aa (1176 aa).

This sequence belongs to the delta endotoxin family.

Its function is as follows. Promotes colloidosmotic lysis by binding to the midgut epithelial cells of many lepidopteran larvae. This chain is Pesticidal crystal protein Cry1Aa (cry1Aa), found in Bacillus thuringiensis subsp. aizawai.